The sequence spans 305 residues: Syntaxin-112 (305 aa).

An N-acetylmethionine modification is found at Met1. The stretch at 52 to 119 forms a coiled coil; the sequence is QEIETIKTLI…TLIETLEKRN (68 aa). Positions 210 to 272 constitute a t-SNARE coiled-coil homology domain; the sequence is DLKTKERHEA…SGGTNSLYYA (63 aa).

It belongs to the syntaxin family. In terms of assembly, part of the t-SNARE complex.

In terms of biological role, vesicle trafficking protein that functions in the secretory pathway. This is Syntaxin-112 (SYP112) from Arabidopsis thaliana (Mouse-ear cress).